The chain runs to 479 residues: DNA polymerase IV (479 aa).

One can recognise a UmuC domain in the interval 7–189 (ILHLDMDAFF…MTVRTLPGVG (183 aa)). Positions 11 and 105 each coordinate Mg(2+). The active site involves E106. Disordered regions lie at residues 357-400 (AGDR…GHGW) and 430-479 (DPEL…TSRP). Positions 381-396 (AERRWPSGHDVRHTEL) are enriched in basic and acidic residues.

The protein belongs to the DNA polymerase type-Y family. Monomer. Requires Mg(2+) as cofactor.

It localises to the cytoplasm. It catalyses the reaction DNA(n) + a 2'-deoxyribonucleoside 5'-triphosphate = DNA(n+1) + diphosphate. Poorly processive, error-prone DNA polymerase involved in untargeted mutagenesis. Copies undamaged DNA at stalled replication forks, which arise in vivo from mismatched or misaligned primer ends. These misaligned primers can be extended by PolIV. Exhibits no 3'-5' exonuclease (proofreading) activity. May be involved in translesional synthesis, in conjunction with the beta clamp from PolIII. The polypeptide is DNA polymerase IV (Streptomyces coelicolor (strain ATCC BAA-471 / A3(2) / M145)).